Here is a 102-residue protein sequence, read N- to C-terminus: NADH-quinone oxidoreductase subunit K 1 (102 aa).

3 helical membrane passes run 5–25, 31–51, and 65–85; these read ISHY…GIFL, IIIL…MVAF, and LFIL…LVVF.

The protein belongs to the complex I subunit 4L family. NDH-1 is composed of 14 different subunits. Subunits NuoA, H, J, K, L, M, N constitute the membrane sector of the complex.

Its subcellular location is the cell inner membrane. The enzyme catalyses a quinone + NADH + 5 H(+)(in) = a quinol + NAD(+) + 4 H(+)(out). Its function is as follows. NDH-1 shuttles electrons from NADH, via FMN and iron-sulfur (Fe-S) centers, to quinones in the respiratory chain. The immediate electron acceptor for the enzyme in this species is believed to be ubiquinone. Couples the redox reaction to proton translocation (for every two electrons transferred, four hydrogen ions are translocated across the cytoplasmic membrane), and thus conserves the redox energy in a proton gradient. In Rhizobium meliloti (strain 1021) (Ensifer meliloti), this protein is NADH-quinone oxidoreductase subunit K 1.